Consider the following 1081-residue polypeptide: DNA polymerase delta catalytic subunit (1081 aa).

Positions 1-22 (MTSKRPGGSSFQPEVKRKRESD) are disordered. Residues Cys-981, Cys-984, Cys-998, and Cys-1001 each coordinate Zn(2+). A CysA-type zinc finger spans residues 981–1001 (CLGCKSVLPRAESENAVCKHC). [4Fe-4S] cluster contacts are provided by Cys-1030, Cys-1033, Cys-1043, and Cys-1048. The CysB motif signature appears at 1030 to 1048 (CQNCAKTMQDKVNCSARDC).

The protein belongs to the DNA polymerase type-B family. Heterodimer with subunits of 125 kDa and 50 kDa. The 125 kDa subunit contains the polymerase active site and most likely the active site for the 3'-5' exonuclease activity. [4Fe-4S] cluster serves as cofactor.

Its subcellular location is the nucleus. It catalyses the reaction DNA(n) + a 2'-deoxyribonucleoside 5'-triphosphate = DNA(n+1) + diphosphate. Possesses two enzymatic activities: DNA synthesis (polymerase) and an exonucleolytic activity that degrades single stranded DNA in the 3'- to 5'-direction. Required with its accessory proteins (proliferating cell nuclear antigen (PCNA) and replication factor C (RFC) or activator 1) for leading strand synthesis. Also involved in completing Okazaki fragments initiated by the DNA polymerase alpha/primase complex. The sequence is that of DNA polymerase delta catalytic subunit from Caenorhabditis elegans.